Reading from the N-terminus, the 180-residue chain is Inner membrane assembly complex subunit 17 (180 aa).

A mitochondrion-targeting transit peptide spans 1–36; the sequence is MMIRNQLYRKCIIGGGRSILNGWVINGTVPNIGLRY. At 37–105 the chain is on the mitochondrial matrix side; it reads LRSGIVTRSN…RKTQDIPIKR (69 aa). The helical transmembrane segment at 106–128 threads the bilayer; sequence FIRPTWMFLLMSSTFYLLGHYIW. The stretch at 129–163 forms a coiled coil; the sequence is WKLEYDEVEKELDRQVTALEEELHNLIEEHRVHGE. Residues 129–180 lie on the Mitochondrial intermembrane side of the membrane; it reads WKLEYDEVEKELDRQVTALEEELHNLIEEHRVHGENEAIKNKKHKHWYKFWS.

Belongs to the INA17 family. As to quaternary structure, component of the inner membrane assembly (INA) complex, composed of INA17 and INA22. Interacts with a subset of F(1)F(0)-ATP synthase subunits of the F(1)-domain and the peripheral stalk.

It localises to the mitochondrion inner membrane. Its function is as follows. Component of the INA complex (INAC) that promotes the biogenesis of mitochondrial F(1)F(0)-ATP synthase. INAC facilitates the assembly of the peripheral stalk and promotes the assembly of the catalytic F(1)-domain with the membrane-embedded F(0)-domain. This chain is Inner membrane assembly complex subunit 17, found in Vanderwaltozyma polyspora (strain ATCC 22028 / DSM 70294 / BCRC 21397 / CBS 2163 / NBRC 10782 / NRRL Y-8283 / UCD 57-17) (Kluyveromyces polysporus).